Here is a 144-residue protein sequence, read N- to C-terminus: Large ribosomal subunit protein uL15 (144 aa).

Positions 1–54 are disordered; the sequence is MRLNTIKPGEGSKKTAKRVGRGIGSGLGKTCGRGHKGQKSRSGGFHKVGFEGGQ. Residues 21 to 31 are compositionally biased toward gly residues; that stretch reads RGIGSGLGKTC.

It belongs to the universal ribosomal protein uL15 family. Part of the 50S ribosomal subunit.

Functionally, binds to the 23S rRNA. The protein is Large ribosomal subunit protein uL15 of Dechloromonas aromatica (strain RCB).